A 415-amino-acid chain; its full sequence is Multidrug resistance protein MdtA (415 aa).

A signal peptide spans 1–21 (MKGSYKSRWVIVIVVVIAAIA). 2 disordered regions span residues 32 to 60 (SRSAAPGATKQAQQSPASGRRGMRSGPLA) and 392 to 415 (EAQSATTPEEKATSREYAKKGARS). Residues 399–415 (PEEKATSREYAKKGARS) are compositionally biased toward basic and acidic residues.

It belongs to the membrane fusion protein (MFP) (TC 8.A.1) family. Part of a tripartite efflux system composed of MdtA, MdtB and MdtC.

The protein resides in the cell inner membrane. Its function is as follows. The MdtABC tripartite complex confers resistance against novobiocin and deoxycholate. In Escherichia coli O81 (strain ED1a), this protein is Multidrug resistance protein MdtA.